Reading from the N-terminus, the 107-residue chain is Nucleoid-associated protein GDI3467/Gdia_2910 (107 aa).

It belongs to the YbaB/EbfC family. Homodimer.

The protein localises to the cytoplasm. It localises to the nucleoid. Binds to DNA and alters its conformation. May be involved in regulation of gene expression, nucleoid organization and DNA protection. In Gluconacetobacter diazotrophicus (strain ATCC 49037 / DSM 5601 / CCUG 37298 / CIP 103539 / LMG 7603 / PAl5), this protein is Nucleoid-associated protein GDI3467/Gdia_2910.